The primary structure comprises 188 residues: FUN14 domain-containing protein 1B (188 aa).

A helical transmembrane segment spans residues Val-21–Phe-41. The YXXL signature appears at Tyr-52–Leu-55. 3 helical membrane-spanning segments follow: residues Tyr-82 to Phe-102, Ala-109 to Ile-129, and Phe-167 to Ala-187.

It belongs to the FUN14 family.

Its subcellular location is the mitochondrion outer membrane. Acts as an activator of hypoxia-induced mitophagy, an important mechanism for mitochondrial quality control. The polypeptide is FUN14 domain-containing protein 1B (fundc1-b) (Xenopus laevis (African clawed frog)).